The sequence spans 204 residues: 3-isopropylmalate dehydratase small subunit (204 aa).

The protein belongs to the LeuD family. LeuD type 1 subfamily. As to quaternary structure, heterodimer of LeuC and LeuD.

The enzyme catalyses (2R,3S)-3-isopropylmalate = (2S)-2-isopropylmalate. It participates in amino-acid biosynthesis; L-leucine biosynthesis; L-leucine from 3-methyl-2-oxobutanoate: step 2/4. In terms of biological role, catalyzes the isomerization between 2-isopropylmalate and 3-isopropylmalate, via the formation of 2-isopropylmaleate. In Chloroflexus aggregans (strain MD-66 / DSM 9485), this protein is 3-isopropylmalate dehydratase small subunit.